We begin with the raw amino-acid sequence, 57 residues long: MARRRRYEGLNPFVAAGLIKFSEEGELERIKLTPKSAVVISVALIAAILVLNLIHPL.

The Cytoplasmic segment spans residues 1–33 (MARRRRYEGLNPFVAAGLIKFSEEGELERIKLT). A helical transmembrane segment spans residues 34 to 55 (PKSAVVISVALIAAILVLNLIH). Residues 56–57 (PL) lie on the Extracellular side of the membrane.

This sequence belongs to the SEC61-beta family. In terms of assembly, component of the protein translocase complex. Heterotrimer consisting of alpha (SecY), beta (SecG) and gamma (SecE) subunits. Can form oligomers of the heterotrimer.

It is found in the cell membrane. Involved in protein export. The function of the beta subunit is unknown, but it may be involved in stabilization of the trimeric complex. In Pyrobaculum neutrophilum (strain DSM 2338 / JCM 9278 / NBRC 100436 / V24Sta) (Thermoproteus neutrophilus), this protein is Preprotein translocase subunit SecG.